The following is a 205-amino-acid chain: Cerebellin-3 (205 aa).

The first 32 residues, 1–32 (MLGTKRHWPPGPSLSLELPLALTLLALRAGWA), serve as a signal peptide directing secretion. A C1q domain is found at 67–205 (APPGRVAFAA…SFSGFLIFPL (139 aa)). An N-linked (GlcNAc...) asparagine glycan is attached at N90.

Heterohexamer; disulfide-linked heterotrimers. Interacts with CBLN1. May also form oligomers with CBLN2 and CBLN4.

It is found in the endoplasmic reticulum. It localises to the golgi apparatus. Its subcellular location is the cis-Golgi network. The protein localises to the secreted. The protein resides in the synapse. Its function is as follows. May be involved in synaptic functions in the CNS. The protein is Cerebellin-3 (CBLN3) of Bos taurus (Bovine).